The primary structure comprises 357 residues: Membrane-bound lytic murein transglycosylase C (357 aa).

The N-terminal stretch at 1-16 (MKKLLALFVIAPILIS) is a signal peptide. Cys17 is lipidated: N-palmitoyl cysteine. Residue Cys17 is the site of S-diacylglycerol cysteine attachment.

This sequence belongs to the transglycosylase Slt family.

The protein resides in the cell outer membrane. The catalysed reaction is Exolytic cleavage of the (1-&gt;4)-beta-glycosidic linkage between N-acetylmuramic acid (MurNAc) and N-acetylglucosamine (GlcNAc) residues in peptidoglycan, from either the reducing or the non-reducing ends of the peptidoglycan chains, with concomitant formation of a 1,6-anhydrobond in the MurNAc residue.. Murein-degrading enzyme. May play a role in recycling of muropeptides during cell elongation and/or cell division. The protein is Membrane-bound lytic murein transglycosylase C of Photorhabdus laumondii subsp. laumondii (strain DSM 15139 / CIP 105565 / TT01) (Photorhabdus luminescens subsp. laumondii).